Here is a 333-residue protein sequence, read N- to C-terminus: GTPase Obg (333 aa).

Residues 4–162 form the Obg domain; it reads GNFVDYVKIY…MDVILELKVL (159 aa). The region spanning 163 to 332 is the OBG-type G domain; the sequence is ADVGLVGFPN…LKDKLWKMLN (170 aa). GTP-binding positions include 169 to 176, 194 to 198, 216 to 219, 283 to 286, and 313 to 315; these read GFPNAGKS, FTTLK, DIPG, SKCD, and SSV. Positions 176 and 196 each coordinate Mg(2+).

This sequence belongs to the TRAFAC class OBG-HflX-like GTPase superfamily. OBG GTPase family. Monomer. Mg(2+) serves as cofactor.

It is found in the cytoplasm. In terms of biological role, an essential GTPase which binds GTP, GDP and possibly (p)ppGpp with moderate affinity, with high nucleotide exchange rates and a fairly low GTP hydrolysis rate. Plays a role in control of the cell cycle, stress response, ribosome biogenesis and in those bacteria that undergo differentiation, in morphogenesis control. This is GTPase Obg from Flavobacterium johnsoniae (strain ATCC 17061 / DSM 2064 / JCM 8514 / BCRC 14874 / CCUG 350202 / NBRC 14942 / NCIMB 11054 / UW101) (Cytophaga johnsonae).